The sequence spans 168 residues: HTH-type transcriptional regulator IscR (168 aa).

The 130-residue stretch at 2 to 131 (KLTSKGRYAV…NNITLGELMS (130 aa)) folds into the HTH rrf2-type domain. The H-T-H motif DNA-binding region spans 28-51 (LADISERQGISLSYLEQLFSKLRK). Residues Cys-92, Cys-98, and Cys-104 each coordinate [2Fe-2S] cluster.

It depends on [2Fe-2S] cluster as a cofactor.

Regulates the transcription of several operons and genes involved in the biogenesis of Fe-S clusters and Fe-S-containing proteins. This Vibrio vulnificus (strain CMCP6) protein is HTH-type transcriptional regulator IscR.